A 109-amino-acid polypeptide reads, in one-letter code: Sulredoxin (109 aa).

Residues 3 to 107 enclose the Rieske domain; sequence WKRTISAKAL…IRDNNGWIEV (105 aa). [2Fe-2S] cluster is bound by residues C43, H45, C62, and H65.

In terms of assembly, homooligomeric. [2Fe-2S] cluster serves as cofactor.

It is found in the cytoplasm. Not yet known. This chain is Sulredoxin (sdx), found in Sulfurisphaera tokodaii (strain DSM 16993 / JCM 10545 / NBRC 100140 / 7) (Sulfolobus tokodaii).